Consider the following 463-residue polypeptide: GTPase Der (463 aa).

Residues 1–20 form a disordered region; it reads MDEGDEDLISGRGFTEGARK. 2 consecutive EngA-type G domains span residues 27–190 and 202–375; these read GVLA…KQAE and RRVA…ESWD. GTP is bound by residues 33 to 40, 80 to 84, 142 to 145, 208 to 215, 255 to 259, and 320 to 323; these read GRPNVGKS, DTGGW, NKID, DTAGI, and NKWD. Residues 376–458 enclose the KH-like domain; it reads QRIPTGKLNA…PIQISVNIRE (83 aa).

This sequence belongs to the TRAFAC class TrmE-Era-EngA-EngB-Septin-like GTPase superfamily. EngA (Der) GTPase family. Associates with the 50S ribosomal subunit.

GTPase that plays an essential role in the late steps of ribosome biogenesis. The protein is GTPase Der of Bifidobacterium longum (strain NCC 2705).